Consider the following 96-residue polypeptide: MQKLIQGLGVGAGAALGVCVRLALTLWLGDSAWPILTINVLGAFLMGWLRPNAFWGTGFLGGFTTFSAMMLNDVSFYFFTAVGCILAWLAGDRLAR.

Helical transmembrane passes span 4-24 and 26-46; these read LIQG…RLAL and LWLG…AFLM. Na(+)-binding residues include glycine 61 and threonine 64. A helical transmembrane segment spans residues 69 to 89; it reads MMLNDVSFYFFTAVGCILAWL.

Belongs to the fluoride channel Fluc/FEX (TC 1.A.43) family.

Its subcellular location is the cell membrane. It carries out the reaction fluoride(in) = fluoride(out). Na(+) is not transported, but it plays an essential structural role and its presence is essential for fluoride channel function. Fluoride-specific ion channel. Important for reducing fluoride concentration in the cell, thus reducing its toxicity. The polypeptide is Fluoride-specific ion channel FluC 1 (Corynebacterium glutamicum (strain ATCC 13032 / DSM 20300 / JCM 1318 / BCRC 11384 / CCUG 27702 / LMG 3730 / NBRC 12168 / NCIMB 10025 / NRRL B-2784 / 534)).